Reading from the N-terminus, the 240-residue chain is 1-(5-phosphoribosyl)-5-[(5-phosphoribosylamino)methylideneamino] imidazole-4-carboxamide isomerase 1 (240 aa).

D8 acts as the Proton acceptor in catalysis. D129 acts as the Proton donor in catalysis.

It belongs to the HisA/HisF family.

Its subcellular location is the cytoplasm. The catalysed reaction is 1-(5-phospho-beta-D-ribosyl)-5-[(5-phospho-beta-D-ribosylamino)methylideneamino]imidazole-4-carboxamide = 5-[(5-phospho-1-deoxy-D-ribulos-1-ylimino)methylamino]-1-(5-phospho-beta-D-ribosyl)imidazole-4-carboxamide. It functions in the pathway amino-acid biosynthesis; L-histidine biosynthesis; L-histidine from 5-phospho-alpha-D-ribose 1-diphosphate: step 4/9. In Ruegeria pomeroyi (strain ATCC 700808 / DSM 15171 / DSS-3) (Silicibacter pomeroyi), this protein is 1-(5-phosphoribosyl)-5-[(5-phosphoribosylamino)methylideneamino] imidazole-4-carboxamide isomerase 1.